We begin with the raw amino-acid sequence, 141 residues long: Hemoglobin subunit alpha (141 aa).

The region spanning 1-141 (VLSPADKSNV…VSTVLTSKYR (141 aa)) is the Globin domain. Ser-3 carries the phosphoserine modification. 2 positions are modified to N6-succinyllysine: Lys-7 and Lys-11. Position 16 is an N6-acetyllysine; alternate (Lys-16). At Lys-16 the chain carries N6-succinyllysine; alternate. At Tyr-24 the chain carries Phosphotyrosine. Position 35 is a phosphoserine (Ser-35). The residue at position 40 (Lys-40) is an N6-succinyllysine. Ser-49 carries the phosphoserine modification. Position 58 (His-58) interacts with O2. His-87 contributes to the heme b binding site. Ser-102 carries the phosphoserine modification. Thr-108 is subject to Phosphothreonine. 2 positions are modified to phosphoserine: Ser-124 and Ser-131. Phosphothreonine occurs at positions 134 and 137. Ser-138 is subject to Phosphoserine.

Belongs to the globin family. As to quaternary structure, heterotetramer of two alpha chains and two beta chains. In terms of tissue distribution, red blood cells.

Functionally, involved in oxygen transport from the lung to the various peripheral tissues. Hemopressin acts as an antagonist peptide of the cannabinoid receptor CNR1. Hemopressin-binding efficiently blocks cannabinoid receptor CNR1 and subsequent signaling. The chain is Hemoglobin subunit alpha (HBA) from Saguinus oedipus (Cotton-top tamarin).